The chain runs to 183 residues: Apo-citrate lyase phosphoribosyl-dephospho-CoA transferase (183 aa).

Belongs to the CitX family.

The catalysed reaction is apo-[citrate lyase ACP] + 2'-(5''-triphospho-alpha-D-ribosyl)-3'-dephospho-CoA = holo-[citrate lyase ACP] + diphosphate. In terms of biological role, transfers 2-(5''-triphosphoribosyl)-3'-dephosphocoenzyme-A on a serine residue to the apo-acyl carrier protein (gamma chain) of the citrate lyase to yield holo-acyl carrier protein. The protein is Apo-citrate lyase phosphoribosyl-dephospho-CoA transferase of Escherichia coli O6:K15:H31 (strain 536 / UPEC).